Reading from the N-terminus, the 291-residue chain is 3-hydroxy-5-phosphonooxypentane-2,4-dione thiolase (291 aa).

Residue Lys203 is the Schiff-base intermediate with substrate of the active site.

This sequence belongs to the DeoC/FbaB aldolase family. In terms of assembly, homodecamer.

It is found in the cytoplasm. The catalysed reaction is dihydroxyacetone phosphate + acetyl-CoA = 3-hydroxy-2,4-dioxopentyl phosphate + CoA. Involved in the degradation of phospho-AI-2, thereby terminating induction of the lsr operon and closing the AI-2 signaling cycle. Catalyzes the transfer of an acetyl moiety from 3-hydroxy-5-phosphonooxypentane-2,4-dione to CoA to form glycerone phosphate and acetyl-CoA. In Salmonella paratyphi A (strain ATCC 9150 / SARB42), this protein is 3-hydroxy-5-phosphonooxypentane-2,4-dione thiolase.